A 2845-amino-acid polypeptide reads, in one-letter code: Adenomatous polyposis coli protein (2845 aa).

Residue alanine 2 is modified to N-acetylalanine. The stretch at 2–61 forms a coiled coil; it reads AAASYDQLLKQVEALKMENSNLRQELEDNSNHLTKLETEASNMKEVLKQLQGSIEDETMT. Serine 105 and serine 109 each carry phosphoserine. Residues 125-245 adopt a coiled-coil conformation; the sequence is SRESTGYLEE…QAAEAERSSQ (121 aa). The segment at 238-304 is disordered; sequence AEAERSSQSR…THSAPRRLTS (67 aa). Positions 239–263 are enriched in basic and acidic residues; that stretch reads EAERSSQSRHDAASHEAGRQHEGHG. Positions 266–279 are enriched in polar residues; it reads ESNTAASSSGQSPA. ARM repeat units lie at residues 451 to 493, 503 to 545, 546 to 589, 590 to 636, 637 to 681, 682 to 723, and 724 to 765; these read LMKL…HYSV, LTNL…IASV, LRNL…VLSA, LWNL…GGGI, LRNV…ACGT, LWNL…SAAA, and LRNL…LDAQ. Phosphoserine occurs at positions 742, 746, and 778. Residues 828 to 873 form a disordered region; it reads VLPSSSSSRGSLDSSRSEKDRSLERERGIGLSAYHPTTENAGTSSK. The segment covering 831 to 841 has biased composition (low complexity); sequence SSSSSRGSLDS. A compositionally biased stretch (basic and acidic residues) spans 842 to 855; sequence SRSEKDRSLERERG. Residues 862–873 are compositionally biased toward polar residues; it reads HPTTENAGTSSK. Serine 906 carries the phosphoserine modification. Disordered regions lie at residues 921–942 and 956–986; these read RRSS…ENSN and RSSN…SYSE. The span at 927 to 942 shows a compositional bias: polar residues; that stretch reads HTHSNTYNFTKSENSN. Low complexity predominate over residues 959–969; the sequence is NDSLNSVTSSD. Phosphoserine is present on residues serine 985, serine 1036, and serine 1040. The tract at residues 1018-1168 is interaction with catenins; the sequence is ELDTPINYSL…TNYSIKYNEE (151 aa). Disordered stretches follow at residues 1058–1079, 1092–1168, 1189–1247, and 1307–1375; these read IKQN…YSEN, GQQE…YNEE, SQKP…GTTC, and ENDV…PEHY. Composition is skewed to polar residues over residues 1066 to 1078 and 1103 to 1128; these read ARSQ…VYSE and RGTS…QSLC. Low complexity predominate over residues 1189 to 1204; it reads SQKPSFSFSKNSSAQS. Over residues 1211–1245 the composition is skewed to polar residues; sequence SPSSENTAVPPSNAKRQNQLRPSSAQRNGQTQKGT. Positions 1354-1365 are enriched in low complexity; it reads SSGAKSPSKSGA. 5 positions are modified to phosphoserine: serine 1359, serine 1370, serine 1384, serine 1391, and serine 1394. 5 disordered regions span residues 1400–1474, 1525–1568, 1587–1606, 1746–2010, and 2042–2069; these read IASS…VNAA, PPVQ…SDDD, RKAK…VARK, DQVQ…APKS, and ISSA…KVGG. A Phosphothreonine modification is found at threonine 1437. A compositionally biased stretch (basic and acidic residues) spans 1447–1465; sequence AKREVPKSKVPAAEKRESG. Positions 1532–1546 are enriched in acidic residues; that stretch reads NGNETESEQPEESNE. Basic and acidic residues predominate over residues 1547–1562; that stretch reads NQDKEVEKPDSEKDLL. Phosphoserine is present on serine 1565. Residues 1747 to 1762 are compositionally biased toward polar residues; it reads QVQQASSTSSGANKNQ. Serine 1772 is subject to Phosphoserine. Positions 1783–1792 are enriched in basic and acidic residues; that stretch reads YRTRVRKNTD. Residues serine 1859, serine 1861, and serine 1862 each carry the phosphoserine modification. Residues 1864–1891 form a highly charged region; it reads DFDDDDVDLSREKAELRKGKESKDSEAK. Basic and acidic residues predominate over residues 1871 to 1894; the sequence is DLSREKAELRKGKESKDSEAKVTC. Residues 1900-1911 are compositionally biased toward low complexity; that stretch reads SSQQAASKSQAS. Residues 1927–1936 show a composition bias toward polar residues; sequence KQPTFPQSSK. Residues 1937-1949 show a composition bias toward basic and acidic residues; that stretch reads DGPDRGAATDEKL. A phosphoserine mark is found at serine 1969 and serine 1971. The segment covering 1979-1990 has biased composition (basic and acidic residues); sequence NNKESEPIKEAE. Positions 2034–2058 are interaction with AXIN1; it reads EDDLLQECISSAMPKKKRPSRLKSE. Phosphoserine occurs at positions 2087, 2092, 2125, 2129, 2130, and 2132. Disordered stretches follow at residues 2146–2190, 2202–2652, and 2664–2845; these read SPFH…GIKG, KIRS…PPVS, and CPIN…VTSV. Threonine 2151 is subject to Phosphothreonine. The basic region stretch occupies residues 2167–2674; that stretch reads ILKPGEKSTL…PINNPRSGRS (508 aa). Residues 2169 to 2187 are compositionally biased toward basic and acidic residues; the sequence is KPGEKSTLEAKKIESENKG. 2 stretches are compositionally biased toward polar residues: residues 2203–2223 and 2257–2272; these read IRSN…NMPS and ASKS…TSPR. Phosphoserine is present on residues serine 2260, serine 2270, and serine 2283. The segment covering 2290–2311 has biased composition (low complexity); that stretch reads SQISGSNKGSSRSGSRDSTPSR. Over residues 2312–2331 the composition is skewed to polar residues; that stretch reads PTQQPLSRPMQSPGRNSISP. A compositionally biased stretch (low complexity) spans 2348–2369; sequence TSSPSTASTKSSGSGKMSYTSP. A compositionally biased stretch (polar residues) spans 2370–2411; that stretch reads GRQLSQQNLTKQASLSKNASSIPRSESASKGLNQMSNGNGSN. 2 stretches are compositionally biased toward low complexity: residues 2417-2429 and 2459-2477; these read SRMS…GSES and SASF…PTRS. 2 positions are modified to phosphoserine: serine 2473 and serine 2535. The segment at 2475–2845 is interaction with DLG1; sequence TRSQAQTPVL…HSGSYLVTSV (371 aa). Residues 2518–2535 show a composition bias toward basic and acidic residues; that stretch reads NDGRPTKRHDIARSHSES. Residues 2555–2568 are compositionally biased toward polar residues; the sequence is SSSLPRVSTWRRTG. Serine 2569 is subject to Phosphoserine. The span at 2569–2579 shows a compositional bias: low complexity; the sequence is SSSSILSASSE. Over residues 2580–2592 the composition is skewed to basic and acidic residues; the sequence is SSEKAKSEDERHV. The segment covering 2626–2638 has biased composition (low complexity); that stretch reads ASQSASSGAASGA. Polar residues predominate over residues 2668 to 2679; that stretch reads NPRSGRSPTGNT. Residues serine 2671 and serine 2674 each carry the phosphoserine modification. The interval 2674–2845 is interaction with MAPRE1; that stretch reads SPTGNTPPVI…HSGSYLVTSV (172 aa). Threonine 2679 carries the post-translational modification Phosphothreonine. The span at 2684 to 2694 shows a compositional bias: low complexity; that stretch reads DSVSEKGSSSI. A compositionally biased stretch (basic and acidic residues) spans 2695–2705; that stretch reads KDSKDSKDTHG. Polar residues predominate over residues 2706-2716; sequence KQSVGSGSPVQ. Serine 2713 and serine 2726 each carry phosphoserine. Positions 2765–2776 are enriched in low complexity; it reads SSSSSSKHSSPS. Polar residues predominate over residues 2786–2814; that stretch reads FNYNPSPRKSSADSTSARPSQIPTPVSTN. Serine 2791 carries the post-translational modification Phosphoserine. The Microtubule tip localization signal signature appears at 2805–2808; it reads SQIP. The short motif at 2843–2845 is the PDZ-binding element; that stretch reads TSV.

Belongs to the adenomatous polyposis coli (APC) family. As to quaternary structure, forms homooligomers. Found in a complex consisting of ARHGEF4, APC and CTNNB1. Found in a complex composed of MACF1, APC, AXIN1, CTNNB1 and GSK3B. The complex composed, at least, of APC, CTNNB1 and GSK3B interacts with JPT1; the interaction requires the inactive form of GSK3B (phosphorylated at 'Ser-9'). Interacts with APC2. Interacts with DLG1 (via PDZ domains) and DLG3 (via PDZ domains). Interacts with alpha- and beta-catenins. Interacts with AXIN1 (via RGS domain). Interacts with ARHGEF4 (via N-terminus). Interacts (via C-terminal residues 2674-2843) with MAPRE1 (via C-terminal residues 206-211); the interaction inhibits association with and bundling of F-actin. Interacts with MAPRE2 and MAPRE3 (via C-terminus). Interacts with DIAPH1; DIAPH1 acts as a scaffold protein for MAPRE1 and APC to stabilize microtubules and promote cell migration. Interacts with DIAPH2. Interacts with SCRIB; may mediate targeting to adherens junctions of epithelial cells. Interacts with SPATA13 (via N-terminus and SH3 domain). Interacts with ASAP1 (via SH3 domain). Interacts (at the cell membrane) with AMER1 and AMER2 (via ARM repeats). Interacts with KHDRBS1. Interacts with actin; binds both to F-actin and actin filament bundles. Phosphorylated; phosphorylation enhances the F-actin bundling activity. Phosphorylated by GSK3B. Post-translationally, ubiquitinated, leading to its degradation by the proteasome. Ubiquitination is facilitated by Axin. Deubiquitinated by ZRANB1/TRABID. As to expression, expressed in liver, spleen, kidney, heart, lung, brain, stomach, intestine, testis and ovary.

Its subcellular location is the cell junction. It localises to the adherens junction. It is found in the cytoplasm. The protein resides in the cytoskeleton. The protein localises to the cell projection. Its subcellular location is the lamellipodium. It localises to the ruffle membrane. It is found in the cell membrane. Its function is as follows. Tumor suppressor. Promotes rapid degradation of CTNNB1 and participates in Wnt signaling as a negative regulator. APC activity is correlated with its phosphorylation state. Activates the GEF activity of SPATA13 and ARHGEF4. Plays a role in hepatocyte growth factor (HGF)-induced cell migration. Required for MMP9 up-regulation via the JNK signaling pathway in colorectal tumor cells. Associates with both microtubules and actin filaments, components of the cytoskeleton. Plays a role in mediating the organization of F-actin into ordered bundles. Functions downstream of Rho GTPases and DIAPH1 to selectively stabilize microtubules. Acts as a mediator of ERBB2-dependent stabilization of microtubules at the cell cortex. It is required for the localization of MACF1 to the cell membrane and this localization of MACF1 is critical for its function in microtubule stabilization. In Mus musculus (Mouse), this protein is Adenomatous polyposis coli protein (Apc).